The primary structure comprises 258 residues: MSRSIKWRRYLLTLLILIILAAGLIYKLRFSNADALWKIISQQCIPHMTTEDDPRPCAEVNIPAGFAVLKDRNGPLQYLLIPTVPISGIESPQLLTATSPNYFADAWQARYFMAEKYGAPIDDTDISLAINSQYGRTQDQLHIHISCLKPQVKTALAAHSADFQQQWQPLPGGLLGHDYWVRRITATELQQPGPFHLLADEMPGAKEQMGRYGLAITALPSGDFLLLANKASLITQDRASAEELQDHTCQVLPHLPVQ.

A helical membrane pass occupies residues 10–30 (YLLTLLILIILAAGLIYKLRF).

This sequence belongs to the Cdh family.

Its subcellular location is the cell inner membrane. It catalyses the reaction a CDP-1,2-diacyl-sn-glycerol + H2O = a 1,2-diacyl-sn-glycero-3-phosphate + CMP + 2 H(+). It functions in the pathway phospholipid metabolism; CDP-diacylglycerol degradation; phosphatidate from CDP-diacylglycerol: step 1/1. This Yersinia pestis protein is CDP-diacylglycerol pyrophosphatase (cdh).